Consider the following 429-residue polypeptide: UDP-N-acetylglucosamine 1-carboxyvinyltransferase 2 (429 aa).

22–23 lines the phosphoenolpyruvate pocket; it reads KN. UDP-N-acetyl-alpha-D-glucosamine is bound at residue arginine 93. Cysteine 117 acts as the Proton donor in catalysis. 2-(S-cysteinyl)pyruvic acid O-phosphothioketal is present on cysteine 117. Residues 122–126, aspartate 305, and isoleucine 327 contribute to the UDP-N-acetyl-alpha-D-glucosamine site; that span reads RPIDQ.

The protein belongs to the EPSP synthase family. MurA subfamily.

The protein localises to the cytoplasm. It catalyses the reaction phosphoenolpyruvate + UDP-N-acetyl-alpha-D-glucosamine = UDP-N-acetyl-3-O-(1-carboxyvinyl)-alpha-D-glucosamine + phosphate. Its pathway is cell wall biogenesis; peptidoglycan biosynthesis. Functionally, cell wall formation. Adds enolpyruvyl to UDP-N-acetylglucosamine. This chain is UDP-N-acetylglucosamine 1-carboxyvinyltransferase 2, found in Bacillus cereus (strain ATCC 14579 / DSM 31 / CCUG 7414 / JCM 2152 / NBRC 15305 / NCIMB 9373 / NCTC 2599 / NRRL B-3711).